The following is a 1389-amino-acid chain: DNA-directed RNA polymerase subunit beta'' (1389 aa).

Residues cysteine 224, cysteine 295, cysteine 302, and cysteine 305 each contribute to the Zn(2+) site.

It belongs to the RNA polymerase beta' chain family. RpoC2 subfamily. As to quaternary structure, in plastids the minimal PEP RNA polymerase catalytic core is composed of four subunits: alpha, beta, beta', and beta''. When a (nuclear-encoded) sigma factor is associated with the core the holoenzyme is formed, which can initiate transcription. Requires Zn(2+) as cofactor.

It localises to the plastid. It is found in the chloroplast. It carries out the reaction RNA(n) + a ribonucleoside 5'-triphosphate = RNA(n+1) + diphosphate. DNA-dependent RNA polymerase catalyzes the transcription of DNA into RNA using the four ribonucleoside triphosphates as substrates. The protein is DNA-directed RNA polymerase subunit beta'' of Atropa belladonna (Belladonna).